The following is a 329-amino-acid chain: MDSATRNPNYSPEVDPQPLPSTNPIHSRPIFSFPKRPALRITTEFDSESTVFFHKISCKFLDSLAKLKFAFHNNSKGEIAEPQISFVSKYLSLHYDLEDHSALVKSSVDVGPKLKLIGTHDVKAQQGEVTMVANLDDPGYALQLSTPLPSIALPKATFKFPQGEISLQEINDHDEDEQVKNSLSVSGTLKGQLLKGLCTAQYKDQEFKLRYRYKDDEMSFLPILSLPSNALSFAFKRRFGPSDKLSYWYNCDSNYWSAVYKHTYGEDFKFKAGYDSEVRLGWASLWVGDEGGKAKTAPMKMKVQFMLQVPQDDIKSSVLMFRVKKRWDI.

Residues 1-10 (MDSATRNPNY) show a composition bias toward polar residues. The segment at 1 to 29 (MDSATRNPNYSPEVDPQPLPSTNPIHSRP) is disordered. Residues 1–57 (MDSATRNPNYSPEVDPQPLPSTNPIHSRPIFSFPKRPALRITTEFDSESTVFFHKIS) constitute a chloroplast transit peptide. Residues 58–60 (CKF) are Cytoplasmic-facing. Residues 61–70 (LDSLAKLKFA) traverse the membrane as a beta stranded segment. Over 71-87 (FHNNSKGEIAEPQISFV) the chain is Chloroplast intermembrane. A beta stranded membrane pass occupies residues 88-97 (SKYLSLHYDL). Over 98–113 (EDHSALVKSSVDVGPK) the chain is Cytoplasmic. A beta stranded membrane pass occupies residues 114-121 (LKLIGTHD). At 122 to 138 (VKAQQGEVTMVANLDDP) the chain is on the chloroplast intermembrane side. Residues 139 to 148 (GYALQLSTPL) form a beta stranded membrane-spanning segment. The Cytoplasmic portion of the chain corresponds to 149 to 154 (PSIALP). A beta stranded transmembrane segment spans residues 155 to 163 (KATFKFPQG). The Chloroplast intermembrane portion of the chain corresponds to 164–205 (EISLQEINDHDEDEQVKNSLSVSGTLKGQLLKGLCTAQYKDQ). Residues 206–214 (EFKLRYRYK) form a beta stranded membrane-spanning segment. Over 215–216 (DD) the chain is Cytoplasmic. The beta stranded transmembrane segment at 217 to 226 (EMSFLPILSL) threads the bilayer. Residue P227 is a topological domain, chloroplast intermembrane. A beta stranded transmembrane segment spans residues 228–236 (SNALSFAFK). Over 237-243 (RRFGPSD) the chain is Cytoplasmic. A beta stranded membrane pass occupies residues 244–253 (KLSYWYNCDS). Topologically, residues 254-255 (NY) are chloroplast intermembrane. Residues 256-265 (WSAVYKHTYG) traverse the membrane as a beta stranded segment. The Cytoplasmic segment spans residues 266-272 (EDFKFKA). A beta stranded membrane pass occupies residues 273-282 (GYDSEVRLGW). Residues 283 to 302 (ASLWVGDEGGKAKTAPMKMK) are Chloroplast intermembrane-facing. Residues 303-312 (VQFMLQVPQD) form a beta stranded membrane-spanning segment. Over 313-329 (DIKSSVLMFRVKKRWDI) the chain is Cytoplasmic.

The protein belongs to the plastid outer envelope porin OEP37 (TC 1.B.47) family. As to quaternary structure, forms an hourglass-shaped multimeric complex.

The protein localises to the plastid. It is found in the chloroplast outer membrane. Voltage-dependent peptide-sensitive high conductance rectifying cation channel with a strong affinity for TIC32 that is imported into the chloroplast. Conductance is pH-dependent decreasing with decreasing pH values. The protein is Outer envelope pore protein 37, chloroplastic (OEP37) of Pisum sativum (Garden pea).